A 168-amino-acid polypeptide reads, in one-letter code: G/U mismatch-specific DNA glycosylase (168 aa).

This sequence belongs to the uracil-DNA glycosylase (UDG) superfamily. TDG/mug family. In terms of assembly, binds DNA as a monomer.

The protein localises to the cytoplasm. The enzyme catalyses Specifically hydrolyzes mismatched double-stranded DNA and polynucleotides, releasing free uracil.. Excises ethenocytosine and uracil, which can arise by alkylation or deamination of cytosine, respectively, from the corresponding mispairs with guanine in ds-DNA. It is capable of hydrolyzing the carbon-nitrogen bond between the sugar-phosphate backbone of the DNA and the mispaired base. The complementary strand guanine functions in substrate recognition. Required for DNA damage lesion repair in stationary-phase cells. This is G/U mismatch-specific DNA glycosylase from Salmonella gallinarum (strain 287/91 / NCTC 13346).